A 160-amino-acid polypeptide reads, in one-letter code: MSRRHAAEKRVILPDMKYNSILLSRFINNIMKKGKKALAEKIVYSAFNKIEKKHRVDPYQTFNNAMHNVKPHLEVTSVRVGGANYQVPTHVDERRGYALASRWIINAASKRSEKMMIDKLAEELFEASNNRGVAIKKKEDTHKMAEANKAFSHFSPKKMQ.

This sequence belongs to the universal ribosomal protein uS7 family. Part of the 30S ribosomal subunit. Contacts proteins S9 and S11.

In terms of biological role, one of the primary rRNA binding proteins, it binds directly to 16S rRNA where it nucleates assembly of the head domain of the 30S subunit. Is located at the subunit interface close to the decoding center, probably blocks exit of the E-site tRNA. The protein is Small ribosomal subunit protein uS7 of Rickettsia akari (strain Hartford).